A 329-amino-acid polypeptide reads, in one-letter code: Phospholipid scramblase 4 (329 aa).

The disordered stretch occupies residues 1-51 (MSGVVPTAPEQPAGEMENQTKPPDPRPDAPPEYNSHFLPGPPGTAVPPPTG). The tract at residues 1–98 (MSGVVPTAPE…PMPNQSVPIT (98 aa)) is proline-rich domain (PRD). Residues 1 to 303 (MSGVVPTAPE…IHFPLDLDVK (303 aa)) are Cytoplasmic-facing. Residues 18 to 25 (NQTKPPDP) carry the SH3-binding 1 motif. The PPxY motif motif lies at 30–33 (PPEY). The span at 39-51 (PGPPGTAVPPPTG) shows a compositional bias: pro residues. The short motif at 41–49 (PPGTAVPPP) is the SH3-binding 2 element. 2 positions are modified to phosphotyrosine; by ABL: tyrosine 83 and tyrosine 88. The SH3-binding 3 motif lies at 98–106 (TWMPGPTPM). S-palmitoyl cysteine attachment occurs at residues cysteine 197, cysteine 198, cysteine 199, cysteine 201, and cysteine 202. Residues 271–283 (NIGSIIRKWNGLL) carry the Nuclear localization signal motif. The helical transmembrane segment at 304-320 (MKAMIFGACFLIDFMYF) threads the bilayer. The Extracellular segment spans residues 321-329 (ERSPPQRSR).

This sequence belongs to the phospholipid scramblase family. In terms of assembly, interacts with PDCD6. Interacts with KPNA2; this interaction mediates the nucleus import of PLSCR4. Ca(2+) serves as cofactor. The cofactor is Mg(2+). It depends on Zn(2+) as a cofactor. In terms of tissue distribution, expressed in heart, brain, placenta, lung, liver, kidney, pancreas, spleen, thymus, prostate, testis, uterus, small intestine and colon. Not detected in peripheral blood lymphocytes.

The protein localises to the cell membrane. The protein resides in the nucleus. The catalysed reaction is a 1,2-diacyl-sn-glycero-3-phosphocholine(in) = a 1,2-diacyl-sn-glycero-3-phosphocholine(out). It catalyses the reaction a 1,2-diacyl-sn-glycero-3-phospho-L-serine(in) = a 1,2-diacyl-sn-glycero-3-phospho-L-serine(out). Its function is as follows. Catalyzes metal ion-induced ATP-independent rapid bidirectional and non-specific movement of phospholipids (lipid scrambling or lipid flip-flop) between the inner and outer leaflet of the plasma membrane and participates in the redistribution of phospholipids between membrane leaflets. Metal ions bind to the calcium-binding site and induce conformation change in the protein. Has a greater affi nity for Ca(2+) than Mg(2+) and Zn(2+). This chain is Phospholipid scramblase 4, found in Homo sapiens (Human).